The primary structure comprises 339 residues: Ketol-acid reductoisomerase (NADP(+)) (339 aa).

Positions 1-182 (MRVYYDRDAD…GGGRAGIIET (182 aa)) constitute a KARI N-terminal Rossmann domain. Residues 24–27 (YGSQ), Arg48, Ser51, Thr53, and 83–86 (DELQ) each bind NADP(+). Residue His108 is part of the active site. Gly134 is an NADP(+) binding site. Residues 183 to 328 (SFKEECETDL…AKLRDMMPWI (146 aa)) form the KARI C-terminal knotted domain. Residues Asp191, Glu195, Glu227, and Glu231 each contribute to the Mg(2+) site. Position 252 (Ser252) interacts with substrate.

It belongs to the ketol-acid reductoisomerase family. The cofactor is Mg(2+).

The enzyme catalyses (2R)-2,3-dihydroxy-3-methylbutanoate + NADP(+) = (2S)-2-acetolactate + NADPH + H(+). The catalysed reaction is (2R,3R)-2,3-dihydroxy-3-methylpentanoate + NADP(+) = (S)-2-ethyl-2-hydroxy-3-oxobutanoate + NADPH + H(+). It participates in amino-acid biosynthesis; L-isoleucine biosynthesis; L-isoleucine from 2-oxobutanoate: step 2/4. The protein operates within amino-acid biosynthesis; L-valine biosynthesis; L-valine from pyruvate: step 2/4. Its function is as follows. Involved in the biosynthesis of branched-chain amino acids (BCAA). Catalyzes an alkyl-migration followed by a ketol-acid reduction of (S)-2-acetolactate (S2AL) to yield (R)-2,3-dihydroxy-isovalerate. In the isomerase reaction, S2AL is rearranged via a Mg-dependent methyl migration to produce 3-hydroxy-3-methyl-2-ketobutyrate (HMKB). In the reductase reaction, this 2-ketoacid undergoes a metal-dependent reduction by NADPH to yield (R)-2,3-dihydroxy-isovalerate. This is Ketol-acid reductoisomerase (NADP(+)) from Rhodopseudomonas palustris (strain HaA2).